Consider the following 500-residue polypeptide: Probable cytosol aminopeptidase (500 aa).

The Mn(2+) site is built by lysine 265 and aspartate 270. Residue lysine 277 is part of the active site. Residues aspartate 288, aspartate 347, and glutamate 349 each contribute to the Mn(2+) site. Residue arginine 351 is part of the active site.

This sequence belongs to the peptidase M17 family. Requires Mn(2+) as cofactor.

It localises to the cytoplasm. The enzyme catalyses Release of an N-terminal amino acid, Xaa-|-Yaa-, in which Xaa is preferably Leu, but may be other amino acids including Pro although not Arg or Lys, and Yaa may be Pro. Amino acid amides and methyl esters are also readily hydrolyzed, but rates on arylamides are exceedingly low.. It catalyses the reaction Release of an N-terminal amino acid, preferentially leucine, but not glutamic or aspartic acids.. Its function is as follows. Presumably involved in the processing and regular turnover of intracellular proteins. Catalyzes the removal of unsubstituted N-terminal amino acids from various peptides. This Corynebacterium glutamicum (strain ATCC 13032 / DSM 20300 / JCM 1318 / BCRC 11384 / CCUG 27702 / LMG 3730 / NBRC 12168 / NCIMB 10025 / NRRL B-2784 / 534) protein is Probable cytosol aminopeptidase.